The sequence spans 713 residues: MEELGRVRLSDPDALLPAGFWAAVTVWLERPQVANKRLCGARMEARGRTLRSHAQAECGPRQGQGHGLEREPGQASPKGEPESGPRASREGTAPAADLNSLWDRVSQSLVHANPEMLAFLCGPSLGPQPEAAQELDLILRTVIPKASPHSPLTEPKKELVVQDVSSGSVTFLPLEEDNEGNLEVKTSNVYQLHLHHNEGEWFISVLIFCPERWHSDGVVYPKPAWLGEELLSKLARWAVENRKSEFKSTLSLVSILRYSRMYQELKEKYRDMVKVWPEVTDPEKFVYEDVAIATYLLILWEEERAEKGVTTKQSFVDLGCGNGLLVHILSNEGHPGRGIDIRRRKIWDMYGPQTQLEEGSITPSDETLFPGVDWLIGNHSDELTPWIPVIAARSSYTCRFFVLPCCFFDFVGRYQRQQSRKTQYREYLDFVLEVGLSCGFHVQEDCLRIPSTKRVCLIGKSRTYPPSAEVWMDEQRTRYLHSRQGHPQSRPGGAHAPSAPQTAAHDAGLQDSCRTVNAGSECVLEGLAAERGAGAPAPGLWVPGFCPREKAERVRNCAALPRDFVDQVVLQVANLLLDRKKFNTGNSEARSLKPWNGGGSLSLAEVAAELNSETLQRLKRECGGLQTLLKNSHQVFEVLNGRVHIRDWRQELQRGKPPEAKQNLSAAVFKTRICWFFAHHPDGCVLPAAQCPFAHGPEELRLSQTLKKQRQAP.

Disordered stretches follow at residues 49-92 and 480-508; these read TLRS…REGT and LHSR…HDAG. Position 76 is a phosphoserine (serine 76). Residues 79–89 show a composition bias toward basic and acidic residues; sequence GEPESGPRASR. Serine 489 carries the post-translational modification Phosphoserine. The C3H1-type zinc finger occupies 669–698; that stretch reads FKTRICWFFAHHPDGCVLPAAQCPFAHGPE.

Belongs to the TRM44 family.

The protein localises to the cytoplasm. The enzyme catalyses uridine(44) in tRNA(Ser) + S-adenosyl-L-methionine = 2'-O-methyluridine(44) in tRNA(Ser) + S-adenosyl-L-homocysteine + H(+). In terms of biological role, probable adenosyl-L-methionine (AdoMet)-dependent tRNA (uracil-O(2)-)-methyltransferase. The protein is Probable tRNA (uracil-O(2)-)-methyltransferase (Trmt44) of Mus musculus (Mouse).